The chain runs to 235 residues: NAD(P)H-quinone oxidoreductase subunit K, chloroplastic (235 aa).

[4Fe-4S] cluster contacts are provided by C43, C44, C108, and C139.

This sequence belongs to the complex I 20 kDa subunit family. As to quaternary structure, NDH is composed of at least 16 different subunits, 5 of which are encoded in the nucleus. Requires [4Fe-4S] cluster as cofactor.

Its subcellular location is the plastid. It localises to the chloroplast thylakoid membrane. The catalysed reaction is a plastoquinone + NADH + (n+1) H(+)(in) = a plastoquinol + NAD(+) + n H(+)(out). The enzyme catalyses a plastoquinone + NADPH + (n+1) H(+)(in) = a plastoquinol + NADP(+) + n H(+)(out). In terms of biological role, NDH shuttles electrons from NAD(P)H:plastoquinone, via FMN and iron-sulfur (Fe-S) centers, to quinones in the photosynthetic chain and possibly in a chloroplast respiratory chain. The immediate electron acceptor for the enzyme in this species is believed to be plastoquinone. Couples the redox reaction to proton translocation, and thus conserves the redox energy in a proton gradient. The polypeptide is NAD(P)H-quinone oxidoreductase subunit K, chloroplastic (Ipomoea purpurea (Common morning glory)).